Here is a 504-residue protein sequence, read N- to C-terminus: Maturase K (504 aa).

The protein belongs to the intron maturase 2 family. MatK subfamily.

Its subcellular location is the plastid. It localises to the chloroplast. Functionally, usually encoded in the trnK tRNA gene intron. Probably assists in splicing its own and other chloroplast group II introns. The protein is Maturase K of Vigna mungo (Black gram).